The sequence spans 420 residues: Gamma-glutamyl phosphate reductase (420 aa).

Belongs to the gamma-glutamyl phosphate reductase family.

The protein resides in the cytoplasm. The enzyme catalyses L-glutamate 5-semialdehyde + phosphate + NADP(+) = L-glutamyl 5-phosphate + NADPH + H(+). It participates in amino-acid biosynthesis; L-proline biosynthesis; L-glutamate 5-semialdehyde from L-glutamate: step 2/2. Catalyzes the NADPH-dependent reduction of L-glutamate 5-phosphate into L-glutamate 5-semialdehyde and phosphate. The product spontaneously undergoes cyclization to form 1-pyrroline-5-carboxylate. This is Gamma-glutamyl phosphate reductase from Shewanella denitrificans (strain OS217 / ATCC BAA-1090 / DSM 15013).